We begin with the raw amino-acid sequence, 210 residues long: Prolactin (210 aa).

Residues 1–23 (MARRSQGTKLHLAVLCLVVSCHA) form the signal peptide. 2 disulfide bridges follow: C69–C183 and C200–C210.

It belongs to the somatotropin/prolactin family.

Its subcellular location is the secreted. The protein is Prolactin (prl) of Oncorhynchus mykiss (Rainbow trout).